The following is a 317-amino-acid chain: Transaldolase (317 aa).

Catalysis depends on Lys126, which acts as the Schiff-base intermediate with substrate.

This sequence belongs to the transaldolase family. Type 1 subfamily. In terms of assembly, homodimer.

It localises to the cytoplasm. It carries out the reaction D-sedoheptulose 7-phosphate + D-glyceraldehyde 3-phosphate = D-erythrose 4-phosphate + beta-D-fructose 6-phosphate. It functions in the pathway carbohydrate degradation; pentose phosphate pathway; D-glyceraldehyde 3-phosphate and beta-D-fructose 6-phosphate from D-ribose 5-phosphate and D-xylulose 5-phosphate (non-oxidative stage): step 2/3. In terms of biological role, transaldolase is important for the balance of metabolites in the pentose-phosphate pathway. This is Transaldolase from Paraburkholderia xenovorans (strain LB400).